The sequence spans 504 residues: ATP synthase subunit alpha, chloroplastic (504 aa).

ATP is bound at residue 170–177 (GDRQTGKT).

The protein belongs to the ATPase alpha/beta chains family. In terms of assembly, F-type ATPases have 2 components, CF(1) - the catalytic core - and CF(0) - the membrane proton channel. CF(1) has five subunits: alpha(3), beta(3), gamma(1), delta(1), epsilon(1). CF(0) has four main subunits: a, b, b' and c.

It is found in the plastid. The protein resides in the chloroplast thylakoid membrane. It carries out the reaction ATP + H2O + 4 H(+)(in) = ADP + phosphate + 5 H(+)(out). Produces ATP from ADP in the presence of a proton gradient across the membrane. The alpha chain is a regulatory subunit. This is ATP synthase subunit alpha, chloroplastic from Ostreococcus tauri.